We begin with the raw amino-acid sequence, 88 residues long: Large ribosomal subunit protein uL23c (88 aa).

This sequence belongs to the universal ribosomal protein uL23 family. In terms of assembly, part of the 50S ribosomal subunit.

The protein localises to the plastid. The protein resides in the chloroplast. In terms of biological role, binds to 23S rRNA. The polypeptide is Large ribosomal subunit protein uL23c (rpl23) (Spirogyra maxima (Green alga)).